A 222-amino-acid chain; its full sequence is Pyridoxine/pyridoxamine 5'-phosphate oxidase (222 aa).

Residues 16-19 (RVSY) and Lys-75 contribute to the substrate site. FMN is bound by residues 70-75 (RTVLCK), 85-86 (FT), Lys-92, and Gln-114. Tyr-132, Arg-136, and Ser-140 together coordinate substrate. FMN contacts are provided by residues 149–150 (QS) and Trp-195. Residue 201–203 (RLH) coordinates substrate. An FMN-binding site is contributed by Arg-205.

Belongs to the pyridoxamine 5'-phosphate oxidase family. As to quaternary structure, homodimer. FMN is required as a cofactor.

The enzyme catalyses pyridoxamine 5'-phosphate + O2 + H2O = pyridoxal 5'-phosphate + H2O2 + NH4(+). The catalysed reaction is pyridoxine 5'-phosphate + O2 = pyridoxal 5'-phosphate + H2O2. It participates in cofactor metabolism; pyridoxal 5'-phosphate salvage; pyridoxal 5'-phosphate from pyridoxamine 5'-phosphate: step 1/1. It functions in the pathway cofactor metabolism; pyridoxal 5'-phosphate salvage; pyridoxal 5'-phosphate from pyridoxine 5'-phosphate: step 1/1. Its function is as follows. Catalyzes the oxidation of either pyridoxine 5'-phosphate (PNP) or pyridoxamine 5'-phosphate (PMP) into pyridoxal 5'-phosphate (PLP). The protein is Pyridoxine/pyridoxamine 5'-phosphate oxidase of Saccharopolyspora erythraea (strain ATCC 11635 / DSM 40517 / JCM 4748 / NBRC 13426 / NCIMB 8594 / NRRL 2338).